We begin with the raw amino-acid sequence, 160 residues long: SKP1-like protein 1A (160 aa).

Residues 102–160 (ILAANYLNIKNLLDLTCQTVADMIKGKTPEEIRTTFNIKNDFTPEEEEEVRRENQWAFE) are interaction with the F-box domain of F-box proteins.

It belongs to the SKP1 family. As to quaternary structure, part of a SCF E3 ubiquitin ligase complex composed of SKP1, CUL1, RBX1 (RBX1A or RBX1B) and F-box proteins. Interacts with SKIP1, SKIP2, SKIP3, SKIP4, SKIP6, FIB1/SKIP7, SKIP8, PP2A11/SKIP10, SKIP11, PP2B11/SKIP12, PP2A14/SKIP13, SKIP14, SKIP15, SKIP16, SKIP19/FBL20, SKIP20, PP2B1/SKIP21, SKIP22, SKIP23, SKIP24, SKIP25, TULP10/SKIP26, SKIP27, SKIP28/MEE11, AFR/SKIP29, SKIP30, SKIP31, SKIP32/FBP7, SKIP33, SKIP35, ADO1/ZTL, ADO2/LKP2, ADO3/FKF1, AFR, COI1, DOR, EBF1, EBF2, EID1, ORE9, PP2A13/SKIP9, TIR1, UFO, SKP2A, CPR1/CPR30, FBL17, NUP58, At1g55000, At1g67340, At1g78100, At3g04660, At3g61590, At4g38940 and At5g49610. The SKP1A subunit of the SCF E3 ubiquitin ligase complex can interact directly with KIN10, KIN11 and the proteasome subunit PAD1. This interaction can be disrupted by PRL1. In case of polerovirus infection, part of a SCF P0 complex composed of the viral silencing suppressor P0, SKP1 and CUL1. Interacts with turnip yellows virus P0. Interacts with VBF and Agrobacterium virF. Binds to KIB1. Accumulates only in meristematic cells. Expressed in inflorescence, shoot and root apical meristems, as well as in developing organs such as gametocytes and seeds. Also detected in cortical layer and epidermis of roots, leaves, pith and vascular bundle of young stem, young floral buds and organ primordia, pollen and through the valve of siliques. Not detectable in mature root tissues.

It localises to the nucleus. The protein localises to the cytoplasm. Its subcellular location is the cytoskeleton. The protein resides in the spindle. It is found in the phragmoplast. The protein operates within protein modification; protein ubiquitination. Functionally, involved in ubiquitination and subsequent proteasomal degradation of target proteins. Together with CUL1, RBX1 and a F-box protein, it forms a SCF E3 ubiquitin ligase complex. The functional specificity of this complex depends on the type of F-box protein. In the SCF complex, it serves as an adapter that links the F-box protein to CUL1. SCF(UFO) is required for vegetative and floral organ development as well as for male gametogenesis. SCF(TIR1) is involved in auxin signaling pathway. SCF(COI1) regulates responses to jasmonates. SCF(EID1) and SCF(AFR) are implicated in phytochrome A light signaling. SCF(ADO1), SCF(ADO2), SCF(ADO3) are related to the circadian clock. SCF(ORE9) seems to be involved in senescence. SCF(EBF1/EBF2) may regulate ethylene signaling. Plays a role during embryogenesis and early postembryonic development, especially during cell elongation and division. Contributes to the correct chromosome segregation during tetrad formation. This is SKP1-like protein 1A from Arabidopsis thaliana (Mouse-ear cress).